The sequence spans 122 residues: MARIAGIDLPKNKRIVIALTYIYGIGNSTAEKILEATNVDPNTRTDNLTEADVSHLRDEIDRNIKVEGDLRREISMNIKRLMDLGCYRGLRHRKGLPVRGQRTKTNARTRKGPARTVAGKKK.

Residues Pro-97–Lys-122 are disordered.

The protein belongs to the universal ribosomal protein uS13 family. Part of the 30S ribosomal subunit. Forms a loose heterodimer with protein S19. Forms two bridges to the 50S subunit in the 70S ribosome.

Its function is as follows. Located at the top of the head of the 30S subunit, it contacts several helices of the 16S rRNA. In the 70S ribosome it contacts the 23S rRNA (bridge B1a) and protein L5 of the 50S subunit (bridge B1b), connecting the 2 subunits; these bridges are implicated in subunit movement. Contacts the tRNAs in the A and P-sites. The chain is Small ribosomal subunit protein uS13 from Pelobacter propionicus (strain DSM 2379 / NBRC 103807 / OttBd1).